The sequence spans 135 residues: MLSPKRTKYRKYHRGRMKGKALRGSKIVYGGFALQATEPCWITSRQIEAGRRVLTRFVKRGGKLWIRIFPDKPVTMRAAGSRMGSGKGAPAYWVAVVKPGRIIYEMKGVSDKIATRALKIAGYKMPVKTKVLKPL.

Belongs to the universal ribosomal protein uL16 family. As to quaternary structure, part of the 50S ribosomal subunit.

It is found in the plastid. The protein localises to the chloroplast. The sequence is that of Large ribosomal subunit protein uL16c from Stigeoclonium helveticum (Green alga).